We begin with the raw amino-acid sequence, 476 residues long: RuvB-like 1 (476 aa).

The disordered stretch occupies residues 1-23 (MDMEVDEAISGTSSSRLAPIEEV). ATP is bound at residue 89-96 (GPPATGKT).

Belongs to the RuvB family. Forms homohexameric rings. May form a dodecamer with ruvb-2 made of two stacked hexameric rings. In terms of tissue distribution, expressed in gonadal cells.

Its subcellular location is the cytoplasm. The protein resides in the nucleus. It catalyses the reaction ATP + H2O = ADP + phosphate + H(+). Functionally, possesses single-stranded DNA-stimulated ATPase and ATP dependent DNA helicase (3' to 5') activity suggesting a role in nuclear processes such as recombination and transcription. May participate in several chromatin remodeling complexes that mediate the ATP-dependent exchange of histones and remodel chromatin by shifting nucleosomes. Involvement in these complexes is likely required for transcriptional activation of selected genes and DNA repair in response to DNA damage. Involved in the Ce-Tor signaling pathway whereby it is required for the accumulation and localization of box C/D snoRNP to nucleoli to regulate ribosomal maturation and thus protein synthesis. Antagonizes the transcriptional activity of transcription factor pha-4, to control postembryonic development and adult longevity. Has a role in pharyngeal development. Has a role in gonadal development. The polypeptide is RuvB-like 1 (Caenorhabditis elegans).